The primary structure comprises 193 residues: Ion-translocating oxidoreductase complex subunit A (193 aa).

The next 6 helical transmembrane spans lie at 5–25 (FLLF…FLGL), 39–59 (IGMG…SWLV), 62–82 (FILL…LVIA), 102–122 (LLGI…VALL), 134–154 (AIYG…FAAI), and 171–191 (SIGL…SGLV).

It belongs to the NqrDE/RnfAE family. In terms of assembly, the complex is composed of six subunits: RnfA, RnfB, RnfC, RnfD, RnfE and RnfG.

It is found in the cell inner membrane. In terms of biological role, part of a membrane-bound complex that couples electron transfer with translocation of ions across the membrane. The protein is Ion-translocating oxidoreductase complex subunit A of Photorhabdus laumondii subsp. laumondii (strain DSM 15139 / CIP 105565 / TT01) (Photorhabdus luminescens subsp. laumondii).